An 842-amino-acid polypeptide reads, in one-letter code: Unconventional myosin-Ia (842 aa).

Residues Gly1–Arg686 enclose the Myosin motor domain. Residue Gly93–Thr100 coordinates ATP. Residues Val563–Asp585 are actin-binding. IQ domains are found at residues Leu689 to Met712, Arg713 to Gly733, and Ile735 to Arg764.

This sequence belongs to the TRAFAC class myosin-kinesin ATPase superfamily. Myosin family. In terms of processing, phosphorylated by ALPK1.

Involved in directing the movement of organelles along actin filaments. The chain is Unconventional myosin-Ia (Myo1a) from Rattus norvegicus (Rat).